The primary structure comprises 288 residues: Acetyl-coenzyme A carboxylase carboxyl transferase subunit beta (288 aa).

The CoA carboxyltransferase N-terminal domain maps to 32–288 (LFAKCPACKH…LELHTEVENV (257 aa)). Zn(2+) is bound by residues C36, C39, C54, and C57. Residues 36–57 (CPACKHTIYQKDLGKNKVCPNC) form a C4-type zinc finger.

It belongs to the AccD/PCCB family. In terms of assembly, acetyl-CoA carboxylase is a heterohexamer composed of biotin carboxyl carrier protein (AccB), biotin carboxylase (AccC) and two subunits each of ACCase subunit alpha (AccA) and ACCase subunit beta (AccD). The cofactor is Zn(2+).

It is found in the cytoplasm. The enzyme catalyses N(6)-carboxybiotinyl-L-lysyl-[protein] + acetyl-CoA = N(6)-biotinyl-L-lysyl-[protein] + malonyl-CoA. It functions in the pathway lipid metabolism; malonyl-CoA biosynthesis; malonyl-CoA from acetyl-CoA: step 1/1. Functionally, component of the acetyl coenzyme A carboxylase (ACC) complex. Biotin carboxylase (BC) catalyzes the carboxylation of biotin on its carrier protein (BCCP) and then the CO(2) group is transferred by the transcarboxylase to acetyl-CoA to form malonyl-CoA. This Lactococcus lactis subsp. cremoris (strain SK11) protein is Acetyl-coenzyme A carboxylase carboxyl transferase subunit beta.